Here is a 394-residue protein sequence, read N- to C-terminus: Mitogen-activated protein kinase 2 (394 aa).

Residues 1-10 (MDGPAQQTDT) show a composition bias toward polar residues. The tract at residues 1–27 (MDGPAQQTDTVMAEAAAAQQPAPPSQP) is disordered. The region spanning 61-346 (KPPIMPIGKG…VEDALAHPYL (286 aa)) is the Protein kinase domain. ATP contacts are provided by residues 67–75 (IGKGAYGIV) and Lys90. Asp187 functions as the Proton acceptor in the catalytic mechanism. Thr219 carries the phosphothreonine modification. The short motif at 219 to 221 (TEY) is the TXY element. Phosphotyrosine is present on Tyr221. Thr224 carries the phosphothreonine modification.

This sequence belongs to the protein kinase superfamily. CMGC Ser/Thr protein kinase family. MAP kinase subfamily. Mg(2+) serves as cofactor. In terms of processing, activated by cold, wounding and UV-C in a cultivar-dependent manner; phosphorylated at Tyr-221 in cv. Subicho but not in cv. Pungchon. As to expression, expressed constitutively in roots, stems, flowers and fruits of the hot pepper (cv. Subicho).

The enzyme catalyses L-seryl-[protein] + ATP = O-phospho-L-seryl-[protein] + ADP + H(+). The catalysed reaction is L-threonyl-[protein] + ATP = O-phospho-L-threonyl-[protein] + ADP + H(+). Its activity is regulated as follows. Activated by threonine and tyrosine phosphorylation. Functionally, protein kinase involved in oxidative stress-mediated and innate immune MAP kinase signaling cascades. This is Mitogen-activated protein kinase 2 from Capsicum annuum (Capsicum pepper).